The sequence spans 494 residues: 3-octaprenyl-4-hydroxybenzoate carboxy-lyase (494 aa).

Asn172 lines the Mn(2+) pocket. Prenylated FMN-binding positions include Ile175–Arg177, Arg189–Leu191, and Arg194–Gly195. Glu238 lines the Mn(2+) pocket. Asp287 functions as the Proton donor in the catalytic mechanism.

This sequence belongs to the UbiD family. Homohexamer. Prenylated FMN serves as cofactor. Mn(2+) is required as a cofactor.

The protein resides in the cell membrane. It carries out the reaction a 4-hydroxy-3-(all-trans-polyprenyl)benzoate + H(+) = a 2-(all-trans-polyprenyl)phenol + CO2. It functions in the pathway cofactor biosynthesis; ubiquinone biosynthesis. Its function is as follows. Catalyzes the decarboxylation of 3-octaprenyl-4-hydroxy benzoate to 2-octaprenylphenol, an intermediate step in ubiquinone biosynthesis. In Escherichia coli O139:H28 (strain E24377A / ETEC), this protein is 3-octaprenyl-4-hydroxybenzoate carboxy-lyase.